A 338-amino-acid chain; its full sequence is DNA-directed RNA polymerase subunit alpha (338 aa).

Residues 1 to 10 (MIQKNWQTLE) show a composition bias toward polar residues. Residues 1–24 (MIQKNWQTLEKPSKLDITPGSDPK) are disordered. The interval 1 to 234 (MIQKNWQTLE…DQLQMFINFE (234 aa)) is alpha N-terminal domain (alpha-NTD). The segment at 250-338 (FNKNLLRKVD…DLAKRLEEPY (89 aa)) is alpha C-terminal domain (alpha-CTD).

The protein belongs to the RNA polymerase alpha chain family. In terms of assembly, homodimer. The RNAP catalytic core consists of 2 alpha, 1 beta, 1 beta' and 1 omega subunit. When a sigma factor is associated with the core the holoenzyme is formed, which can initiate transcription.

It catalyses the reaction RNA(n) + a ribonucleoside 5'-triphosphate = RNA(n+1) + diphosphate. Functionally, DNA-dependent RNA polymerase catalyzes the transcription of DNA into RNA using the four ribonucleoside triphosphates as substrates. This Rhodospirillum centenum (strain ATCC 51521 / SW) protein is DNA-directed RNA polymerase subunit alpha.